The following is a 1276-amino-acid chain: Probable outer membrane protein pmp6 (1276 aa).

An N-terminal signal peptide occupies residues Met1–Ala23. The Autotransporter domain maps to Asp981–Phe1276.

It belongs to the PMP outer membrane protein family.

It is found in the secreted. The protein localises to the cell wall. Its subcellular location is the cell outer membrane. The sequence is that of Probable outer membrane protein pmp6 (pmp6) from Chlamydia pneumoniae (Chlamydophila pneumoniae).